A 100-amino-acid chain; its full sequence is MAAALALVAGVLSGAVLPLWSALPQYKKKITDRCFHHSECYSGCCLMDLDSGGAFCAPRARITMICLPQTKGATNIICPCRMGLTCISKDLMCSRRCHMI.

A signal peptide spans 1–21; the sequence is MAAALALVAGVLSGAVLPLWS. Intrachain disulfides connect Cys-34/Cys-45, Cys-40/Cys-56, Cys-44/Cys-78, Cys-66/Cys-86, and Cys-80/Cys-97.

This sequence belongs to the colipase family.

Its subcellular location is the secreted. This Homo sapiens (Human) protein is Colipase-like protein 2 (CLPSL2).